We begin with the raw amino-acid sequence, 325 residues long: Reticulocalbin-1 (325 aa).

The first 23 residues, 1–23 (MARGGRLGLALGLLLALVLALRA), serve as a signal peptide directing secretion. An N-linked (GlcNAc...) asparagine; partial glycan is attached at Asn47. Phosphoserine occurs at positions 49 and 74. 6 consecutive EF-hand domains span residues 73-108 (ESKE…VQKR), 109-144 (YIYD…YYLG), 160-195 (KMLP…EEFE), 197-232 (MKEI…HEDN), 238-273 (WVLS…QDYD), and 274-309 (HAQA…FVGS). 28 residues coordinate Ca(2+): Asp86, Asp88, Asp90, Glu97, Asp122, Asp124, Asp126, Lys128, Glu133, Asp173, Asp175, Asp177, Thr179, Glu184, Asp210, Asn212, Asp214, Glu221, Asp251, Asn253, Asp255, Lys257, Glu262, Asp287, Asn289, Asp291, Met293, and Glu298. Positions 322–325 (HDEL) match the Prevents secretion from ER motif.

The protein belongs to the CREC family. O-glycosylated. O-mannosylated by POMT1 and POMT2 and elongated by POMGNT1.

It localises to the endoplasmic reticulum lumen. In terms of biological role, may regulate calcium-dependent activities in the endoplasmic reticulum lumen or post-ER compartment. The protein is Reticulocalbin-1 (Rcn1) of Mus musculus (Mouse).